The sequence spans 426 residues: Serine--tRNA ligase (426 aa).

An L-serine-binding site is contributed by T233 to E235. R264–E266 is a binding site for ATP. E287 serves as a coordination point for L-serine. An ATP-binding site is contributed by E351 to S354. Residue S387 coordinates L-serine.

This sequence belongs to the class-II aminoacyl-tRNA synthetase family. Type-1 seryl-tRNA synthetase subfamily. In terms of assembly, homodimer. The tRNA molecule binds across the dimer.

It is found in the cytoplasm. It carries out the reaction tRNA(Ser) + L-serine + ATP = L-seryl-tRNA(Ser) + AMP + diphosphate + H(+). The catalysed reaction is tRNA(Sec) + L-serine + ATP = L-seryl-tRNA(Sec) + AMP + diphosphate + H(+). The protein operates within aminoacyl-tRNA biosynthesis; selenocysteinyl-tRNA(Sec) biosynthesis; L-seryl-tRNA(Sec) from L-serine and tRNA(Sec): step 1/1. In terms of biological role, catalyzes the attachment of serine to tRNA(Ser). Is also able to aminoacylate tRNA(Sec) with serine, to form the misacylated tRNA L-seryl-tRNA(Sec), which will be further converted into selenocysteinyl-tRNA(Sec). In Xylella fastidiosa (strain M12), this protein is Serine--tRNA ligase.